We begin with the raw amino-acid sequence, 180 residues long: MIVIGLGNPGEKYSNTRHNVGFMVLDRLSNSWKKGPNYLYSDINISGEKIKLIKPMTYMNLSGEVFKYLPHDDIIVVYDDLDLPLGKIRIRKNGSAGGHNGIKSIISFIGQDFPRIRVGIGPKPENIDAADYVLSNFTKEEFEVLDKIINLCTEAIEYIVENGIDKAMNRYNSIEISTGK.

Tyr-13 contributes to the tRNA binding site. His-18 functions as the Proton acceptor in the catalytic mechanism. The tRNA site is built by Tyr-58, Asn-60, and Asn-100.

It belongs to the PTH family. Monomer.

The protein localises to the cytoplasm. It carries out the reaction an N-acyl-L-alpha-aminoacyl-tRNA + H2O = an N-acyl-L-amino acid + a tRNA + H(+). In terms of biological role, hydrolyzes ribosome-free peptidyl-tRNAs (with 1 or more amino acids incorporated), which drop off the ribosome during protein synthesis, or as a result of ribosome stalling. Its function is as follows. Catalyzes the release of premature peptidyl moieties from peptidyl-tRNA molecules trapped in stalled 50S ribosomal subunits, and thus maintains levels of free tRNAs and 50S ribosomes. This is Peptidyl-tRNA hydrolase from Fervidobacterium nodosum (strain ATCC 35602 / DSM 5306 / Rt17-B1).